We begin with the raw amino-acid sequence, 328 residues long: NADH-quinone oxidoreductase subunit H (328 aa).

The next 8 membrane-spanning stretches (helical) occupy residues 10-30, 80-100, 118-138, 155-175, 191-211, 243-263, 272-292, and 306-326; these read IIKIVVIVLIFSALAGIGTYF, IAPVITAATAFMAAAAIPFLP, IGILYILGIMGVGLYGPLLGG, AVFISYEVVTGLSILAPIMMV, ITSWIVWTQPVAFILFWIAAF, LFFIGEYANMFFISFVISLLF, LLGALGLLAKVAFFFFFFLWT, and WLCWKVLMPIALINIVITAIV.

It belongs to the complex I subunit 1 family. As to quaternary structure, NDH-1 is composed of 14 different subunits. Subunits NuoA, H, J, K, L, M, N constitute the membrane sector of the complex.

The protein localises to the cell inner membrane. It carries out the reaction a quinone + NADH + 5 H(+)(in) = a quinol + NAD(+) + 4 H(+)(out). Its function is as follows. NDH-1 shuttles electrons from NADH, via FMN and iron-sulfur (Fe-S) centers, to quinones in the respiratory chain. The immediate electron acceptor for the enzyme in this species is believed to be ubiquinone. Couples the redox reaction to proton translocation (for every two electrons transferred, four hydrogen ions are translocated across the cytoplasmic membrane), and thus conserves the redox energy in a proton gradient. This subunit may bind ubiquinone. The sequence is that of NADH-quinone oxidoreductase subunit H from Sulfurimonas denitrificans (strain ATCC 33889 / DSM 1251) (Thiomicrospira denitrificans (strain ATCC 33889 / DSM 1251)).